A 55-amino-acid polypeptide reads, in one-letter code: MAKGSREKIKLESSASTGHFYTTSKNKRTKPEKMEIMKFDPTIRKHVAYKETKLK.

The span at 1-11 shows a compositional bias: basic and acidic residues; it reads MAKGSREKIKL. Residues 1-32 are disordered; that stretch reads MAKGSREKIKLESSASTGHFYTTSKNKRTKPE. Residues 13-24 are compositionally biased toward polar residues; that stretch reads SSASTGHFYTTS.

It belongs to the bacterial ribosomal protein bL33 family.

The chain is Large ribosomal subunit protein bL33 from Polynucleobacter necessarius subsp. necessarius (strain STIR1).